The primary structure comprises 217 residues: Insulin-like growth factor 2.S (217 aa).

Residues 1 to 56 (MEQLSCKHRSSSVEAEAQLCRQTESRSTQLPRMSVMRHLFLLSITFLVYTLDSAKA) form the signal peptide. The interval 57–83 (YRATETLCGGELVDTLQFVCGDRGFYF) is b. Cystine bridges form between Cys-64–Cys-103, Cys-76–Cys-116, and Cys-102–Cys-107. A c region spans residues 84–96 (STNNGRSNRRPNR). Residues 97 to 117 (GIVDVCCFKSCDLELLETYCA) form an a region. Residues 118-123 (KPTKNE) are d. A propeptide spans 124–217 (RDVSTAPATA…LQQASEPSHN (94 aa)) (e peptide).

The protein belongs to the insulin family.

The protein localises to the secreted. Functionally, the insulin-like growth factors, isolated from plasma, are structurally and functionally related to insulin but have a much higher growth-promoting activity. Promotes anterior neural development. Acts as a ligand for integrin which is required for IGF2 signaling. This Xenopus laevis (African clawed frog) protein is Insulin-like growth factor 2.S.